A 337-amino-acid polypeptide reads, in one-letter code: Diacylglycerol O-acyltransferase 2-like protein 6 (337 aa).

The next 2 helical transmembrane spans lie at 22-42 and 102-122; these read MPVYVFLGAIPIIVIPYFLVF and YIIASHPHGVLPYGTFINFAT.

It belongs to the diacylglycerol acyltransferase family.

Its subcellular location is the endoplasmic reticulum membrane. It carries out the reaction 1,2-di-(9Z-octadecenoyl)-sn-glycerol + (9Z)-octadecenoyl-CoA = 1,2,3-tri-(9Z-octadecenoyl)-glycerol + CoA. Its function is as follows. Diglyceride acyltransferase that uses fatty acyl-CoA as substrate. Particularly active with oleate as a substrate. Has no wax synthase activity to produce wax esters. The chain is Diacylglycerol O-acyltransferase 2-like protein 6 (DGAT2L6) from Bos taurus (Bovine).